The primary structure comprises 1398 residues: MAP-homologous protein 1 (1398 aa).

Met1 bears the N-acetylmethionine mark. The interval 21–77 is disordered; that stretch reads GWLVRPSASTSKSSRPGKSESKANSVAPDIQMDTARPPVFETSVDSSSSILSSNDKG. Polar residues predominate over residues 27–36; sequence SASTSKSSRP. Residues 63 to 73 are compositionally biased toward low complexity; it reads SVDSSSSILSS. Ser81 carries the post-translational modification Phosphoserine. Disordered regions lie at residues 90 to 144, 156 to 186, and 191 to 210; these read NQRA…APAP, HRKK…GAAI, and TATI…PPSY. 2 stretches are compositionally biased toward polar residues: residues 91 to 102 and 114 to 123; these read QRANAGSTSVPT and VVETNLSNVE. The segment covering 159–186 has biased composition (basic and acidic residues); sequence KDQEQQEKERERKERSPSPTHVDRGAAI. Residue Lys221 forms a Glycyl lysine isopeptide (Lys-Gly) (interchain with G-Cter in ubiquitin) linkage. Residue Thr222 is modified to Phosphothreonine. Disordered stretches follow at residues 244–270, 296–382, 395–428, and 515–548; these read HSPE…PDPR, SSAS…PSSH, GNNN…SSME, and NPEE…NNSQ. Phosphoserine is present on residues Ser309, Ser311, Ser354, and Ser357. Over residues 357 to 371 the composition is skewed to low complexity; the sequence is SIVDTVDSNSDVSSS. Over residues 372 to 381 the composition is skewed to polar residues; that stretch reads AQNNNQTPSS. The segment covering 396-426 has biased composition (low complexity); that stretch reads NNNNNSTNASSLSANVNNPDTSSTSLWSSSS. Over residues 521-538 the composition is skewed to basic and acidic residues; it reads ANAKSKEEMAPQKQNEVE. Thr577 carries the post-translational modification Phosphothreonine. Residues 605-615 are compositionally biased toward low complexity; that stretch reads STSSLASMVSS. Disordered regions lie at residues 605-630, 1148-1169, and 1203-1223; these read STSS…EILP, LKSP…PNSE, and DAED…HEDV. Over residues 1160–1169 the composition is skewed to polar residues; that stretch reads GGNQAQPNSE. The span at 1208–1223 shows a compositional bias: basic and acidic residues; that stretch reads VEFREGDDSNVNHEDV. The tract at residues 1227 to 1258 is tau/MAP repeat-like; it reads DQQFRDEVDIKNKYSIIKRELEHEKLVGGGDL. The interval 1313–1372 is disordered; that stretch reads QEETAFRTKDEQQSSQSNDSSANASPTTDPISTGSNTSRTNDNAHIPPTDAPGFDKFMNN. Low complexity predominate over residues 1325–1337; that stretch reads QSSQSNDSSANAS. A compositionally biased stretch (polar residues) spans 1338–1355; the sequence is PTTDPISTGSNTSRTNDN.

It localises to the cytoplasm. The protein resides in the cytoskeleton. The protein localises to the spindle. Essential for the formation and/or stabilization of microtubules. Binds to microtubules in vitro. In Saccharomyces cerevisiae (strain ATCC 204508 / S288c) (Baker's yeast), this protein is MAP-homologous protein 1 (MHP1).